The sequence spans 329 residues: U5 small nuclear ribonucleoprotein TSSC4 (329 aa).

Disordered regions lie at residues 1–88 (MAEA…MSST) and 104–156 (ARRA…PDYV). The span at 22-41 (DTLPSDTVSLSDSDSDLSLP) shows a compositional bias: low complexity. A phosphoserine mark is found at Ser60, Ser67, Ser86, Ser132, Ser143, and Ser146. Residues 77-104 (VQPFHLRGMSSTFSQRSRDIFDCLEGAA) form a hom2; mediates interaction with the U5 snRNP complexes and required for spliceosomal tri-snRNP complex assembly region. Positions 149 to 316 (VPPVPDYVAH…SRKRSRDHFR (168 aa)) are interaction with SNRNP200. Residues 150–186 (PPVPDYVAHPERWTKYSLEDVTEVSEQSNQATALAFL) form a hom3; mediates interaction with the U5 snRNP complexes region. Residues 201–250 (FNQDPSSCGEGRVIFTKPVRGVEARHERKRVLGKVGEPGRGGLGNPATDR) are hom4; necessary for interaction with the PRPF19 complex and required for spliceosomal tri-snRNP complex assembly. N6-acetyllysine is present on Lys217. Positions 221 to 329 (GVEARHERKR…SSPEDPGAEV (109 aa)) are disordered. Position 265 is a phosphoserine (Ser265). The span at 306–317 (GSRKRSRDHFRN) shows a compositional bias: basic residues. At Ser321 the chain carries Phosphoserine.

Belongs to the TSSC4 family. Interacts in a RNA-independent manner with distinct U5 snRNP-containing complexes, the mono-U5 snRNP and the post-splicing U5 snRNP-PRPF19 complex. Interacts with SNRNP200; the interaction is direct, excludes recruitment of C9ORF78 and WBP4 to SNRNP200 and negatively regulates its RNA helicase activity. Interacts with PRPF8; the interaction is direct. As to expression, expressed in fetal brain, lung, liver and kidney. Widely expressed in adult tissues.

It localises to the nucleus. The protein resides in the cytoplasm. In terms of biological role, protein associated with the U5 snRNP, during its maturation and its post-splicing recycling and which is required for spliceosomal tri-snRNP complex assembly in the nucleus. Has a molecular sequestering activity and transiently hinders SNRNP200 binding sites for constitutive splicing factors that intervene later during the assembly of the spliceosome and splicing. Together with its molecular sequestering activity, may also function as a molecular adapter and placeholder, coordinating the assembly of the U5 snRNP and its association with the U4/U6 di-snRNP. The polypeptide is U5 small nuclear ribonucleoprotein TSSC4 (Homo sapiens (Human)).